Reading from the N-terminus, the 472-residue chain is Serine/threonine-protein kinase ULK3 (472 aa).

Residues 14–270 (FILTERLGSG…FQDFFAHPWV (257 aa)) form the Protein kinase domain. ATP contacts are provided by residues 20-28 (LGSGTYATV) and lysine 44. Aspartate 137 (proton acceptor) is an active-site residue. The residue at position 176 (serine 176) is a Phosphoserine. The region spanning 280-348 (SLGRATALVV…SRAEELKAIV (69 aa)) is the MIT 1 domain. A phosphoserine; by autocatalysis mark is found at serine 300, serine 350, serine 384, and serine 464. In terms of domain architecture, MIT 2 spans 375 to 444 (RLLAALEVAS…ARAEYLKEQV (70 aa)).

This sequence belongs to the protein kinase superfamily. Ser/Thr protein kinase family. APG1/unc-51/ULK1 subfamily. In terms of assembly, interacts (via protein kinase domain) with SUFU. Post-translationally, autophosphorylated. Autophosphorylation is blocked by interaction with SUFU. As to expression, widely expressed. Highest levels observed in fetal brain. In adult tissues, high levels in brain, liver and kidney, moderate levels in testis and adrenal gland and low levels in heart, lung, stomach, thymus, prostate and placenta. In the brain, highest expression in the hippocampus, high levels also detected in the cerebellum, olfactory bulb and optic nerve. In the central nervous system, lowest levels in the spinal cord.

Its subcellular location is the cytoplasm. The catalysed reaction is L-seryl-[protein] + ATP = O-phospho-L-seryl-[protein] + ADP + H(+). It carries out the reaction L-threonyl-[protein] + ATP = O-phospho-L-threonyl-[protein] + ADP + H(+). Serine/threonine protein kinase that acts as a regulator of Sonic hedgehog (SHH) signaling and autophagy. Acts as a negative regulator of SHH signaling in the absence of SHH ligand: interacts with SUFU, thereby inactivating the protein kinase activity and preventing phosphorylation of GLI proteins (GLI1, GLI2 and/or GLI3). Positively regulates SHH signaling in the presence of SHH: dissociates from SUFU, autophosphorylates and mediates phosphorylation of GLI2, activating it and promoting its nuclear translocation. Phosphorylates in vitro GLI2, as well as GLI1 and GLI3, although less efficiently. Also acts as a regulator of autophagy: following cellular senescence, able to induce autophagy. In Homo sapiens (Human), this protein is Serine/threonine-protein kinase ULK3 (ULK3).